The following is a 1074-amino-acid chain: DNA annealing helicase and endonuclease ZRANB3 (1074 aa).

The 163-residue stretch at 46–208 (TFALRRDGRC…FMQIEALFPQ (163 aa)) folds into the Helicase ATP-binding domain. The segment at 46–481 (TFALRRDGRC…GRKEKLQAEE (436 aa)) is DNA annealing helicase activity. Residue 59-66 (DEMGLGKT) coordinates ATP. The short motif at 157–160 (DESH) is the DEAH box element. The Helicase C-terminal domain occupies 325–481 (AVKDYIKMML…GRKEKLQAEE (157 aa)). A PIP-box motif is present at residues 519-526 (QRDIRSFF). Ser-566 bears the Phosphoserine mark. The RanBP2-type zinc-finger motif lies at 617 to 647 (FCGEGWQCAFCTYINNSVLPYCEMCENPRGG). Residues 659–719 (QNKNKNEKDD…RLTPQPGDEQ (61 aa)) form a disordered region. 2 stretches are compositionally biased toward basic and acidic residues: residues 662–674 (NKNE…DTSK) and 696–711 (AKSK…EDRL). One can recognise an HNH domain in the interval 1006–1046 (PGEGHFWQVDHIKPVSGGGGQCSLDNLQTLCTVCHRERTAQ). Positions 1006–1074 (PGEGHFWQVD…SDITRFLVKK (69 aa)) are endonuclease activity. Positions 1069–1073 (RFLVK) match the APIM motif motif.

Belongs to the SNF2/RAD54 helicase family. Interacts (via PIP-box and RanBP2-type zinc finger) with PCNA (when PCNA is polyubiquitinated via 'Lys-63'-linked polyubiquitin).

The protein localises to the nucleus. Its subcellular location is the chromosome. Its function is as follows. DNA annealing helicase and endonuclease required to maintain genome stability at stalled or collapsed replication forks by facilitating fork restart and limiting inappropriate recombination that could occur during template switching events. Recruited to the sites of stalled DNA replication by polyubiquitinated PCNA and acts as a structure-specific endonuclease that cleaves the replication fork D-loop intermediate, generating an accessible 3'-OH group in the template of the leading strand, which is amenable to extension by DNA polymerase. In addition to endonuclease activity, also catalyzes the fork regression via annealing helicase activity in order to prevent disintegration of the replication fork and the formation of double-strand breaks. This chain is DNA annealing helicase and endonuclease ZRANB3 (ZRANB3), found in Bos taurus (Bovine).